Reading from the N-terminus, the 299-residue chain is Elongation factor Ts (299 aa).

The involved in Mg(2+) ion dislocation from EF-Tu stretch occupies residues 81–84 (TDFV).

The protein belongs to the EF-Ts family.

Its subcellular location is the cytoplasm. Functionally, associates with the EF-Tu.GDP complex and induces the exchange of GDP to GTP. It remains bound to the aminoacyl-tRNA.EF-Tu.GTP complex up to the GTP hydrolysis stage on the ribosome. This Halothermothrix orenii (strain H 168 / OCM 544 / DSM 9562) protein is Elongation factor Ts.